The following is a 570-amino-acid chain: Double-stranded RNA-binding protein Staufen homolog 2 (570 aa).

The DRBM 1 domain maps to Thr-8–Leu-75. Disordered stretches follow at residues Thr-71–Ile-94 and Ala-178–Asp-203. Residues Pro-83–Ile-94 are compositionally biased toward polar residues. Positions Thr-95–Asn-181 constitute a DRBM 2 domain. The residue at position 188 (Ser-188) is a Phosphoserine. A compositionally biased stretch (basic and acidic residues) spans Ser-194–Asp-203. DRBM domains are found at residues Ser-207–Lys-274 and Asn-307–Tyr-375. 2 short sequence motifs (nuclear localization signal) span residues Lys-273–Arg-291 and Leu-373–Ile-412. The disordered stretch occupies residues Leu-381–Leu-413. Residues Leu-381 to Ile-570 form a required for dendritic transport region. A Phosphoserine modification is found at Ser-395. Position 405 is a phosphothreonine (Thr-405). Phosphoserine occurs at positions 416, 426, 440, 455, and 492. Residues Leu-545–Ile-570 form a disordered region. Polar residues predominate over residues Asn-551–Gln-561.

Interacts with microtubules. Isoform 2 and isoform 3 may also interact with ribosomes, and this association is independent of translation. Identified in a mRNP complex, at least composed of DHX9, DDX3X, ELAVL1, HNRNPU, IGF2BP1, ILF3, PABPC1, PCBP2, PTBP2, STAU1, STAU2, SYNCRIP and YBX1. Interacts with the exportin XPO5. This requires RNA and RAN bound to GTP. Interacts with TRIM71 (via NHL repeats) in an RNA-dependent manner. In terms of tissue distribution, expressed in brain and neurons, where isoform 2 and isoform 3 appear to be the most abundant. Expressed at the neuromuscular junction of the extensor digitorum longus, tibialis anterior and soleus muscles. Expression at neuromuscular junctions is most pronounced in slow-twitch muscle. Also weakly expressed in heart, kidney, ovary and testis.

It localises to the cytoplasm. The protein resides in the nucleus. Its subcellular location is the nucleolus. It is found in the endoplasmic reticulum. In terms of biological role, RNA-binding protein required for the microtubule-dependent transport of neuronal RNA from the cell body to the dendrite. As protein synthesis occurs within the dendrite, the localization of specific mRNAs to dendrites may be a prerequisite for neurite outgrowth and plasticity at sites distant from the cell body. In Mus musculus (Mouse), this protein is Double-stranded RNA-binding protein Staufen homolog 2 (Stau2).